Here is a 449-residue protein sequence, read N- to C-terminus: Tubulin beta-7 chain (449 aa).

Gln-11, Glu-69, Ser-138, Gly-142, Thr-143, Gly-144, Asn-204, and Asn-226 together coordinate GTP. Glu-69 contacts Mg(2+). The disordered stretch occupies residues 422 to 449 (YQQYQDATADEEGEYEEEEAEYEQEETY). Residues 429–449 (TADEEGEYEEEEAEYEQEETY) are compositionally biased toward acidic residues.

The protein belongs to the tubulin family. In terms of assembly, dimer of alpha and beta chains. A typical microtubule is a hollow water-filled tube with an outer diameter of 25 nm and an inner diameter of 15 nM. Alpha-beta heterodimers associate head-to-tail to form protofilaments running lengthwise along the microtubule wall with the beta-tubulin subunit facing the microtubule plus end conferring a structural polarity. Microtubules usually have 13 protofilaments but different protofilament numbers can be found in some organisms and specialized cells. It depends on Mg(2+) as a cofactor.

The protein resides in the cytoplasm. The protein localises to the cytoskeleton. Functionally, tubulin is the major constituent of microtubules, a cylinder consisting of laterally associated linear protofilaments composed of alpha- and beta-tubulin heterodimers. Microtubules grow by the addition of GTP-tubulin dimers to the microtubule end, where a stabilizing cap forms. Below the cap, tubulin dimers are in GDP-bound state, owing to GTPase activity of alpha-tubulin. The protein is Tubulin beta-7 chain (TUBB7) of Arabidopsis thaliana (Mouse-ear cress).